Consider the following 134-residue polypeptide: Endoribonuclease YbeY (134 aa).

His94, His98, and His104 together coordinate Zn(2+).

It belongs to the endoribonuclease YbeY family. Zn(2+) is required as a cofactor.

It is found in the cytoplasm. In terms of biological role, single strand-specific metallo-endoribonuclease involved in late-stage 70S ribosome quality control and in maturation of the 3' terminus of the 16S rRNA. The chain is Endoribonuclease YbeY from Campylobacter jejuni subsp. jejuni serotype O:23/36 (strain 81-176).